The primary structure comprises 143 residues: Large ribosomal subunit protein uL16 (143 aa).

This sequence belongs to the universal ribosomal protein uL16 family. Part of the 50S ribosomal subunit.

Functionally, binds 23S rRNA and is also seen to make contacts with the A and possibly P site tRNAs. The sequence is that of Large ribosomal subunit protein uL16 from Caulobacter vibrioides (strain ATCC 19089 / CIP 103742 / CB 15) (Caulobacter crescentus).